An 83-amino-acid polypeptide reads, in one-letter code: Salivary thrombin inhibitor anophelin (83 aa).

A signal peptide spans 1 to 22; that stretch reads MANKLVLISLLCVVLVAKITQA. A disordered region spans residues 25 to 51; it reads QYAPGDEPSYDEDTDDSDKLVENDTSI. N-linked (GlcNAc...) asparagine glycosylation is present at Asn47. Positions 54 to 83 are sufficient for host thrombin inhibition; sequence EDYAAIEASLSETFNTAADPGRRLGEGSKP. Residues 56–62 are blocks exosite I of host thrombin; the sequence is YAAIEAS. The tract at residues 64–83 is disordered; that stretch reads SETFNTAADPGRRLGEGSKP. A blocks active site cleft of host thrombin in a reverse direction compared to substrates region spans residues 72-75; the sequence is DPGR. Residues 73 to 83 are compositionally biased toward basic and acidic residues; the sequence is PGRRLGEGSKP.

It belongs to the anophelin family. In terms of assembly, interacts with human F2 (thrombin); the interaction results in thrombin inhibition. Salivary gland (at protein level).

Its subcellular location is the secreted. Its activity is regulated as follows. Increasing concentration of NaCl decreases affinity for thrombin. Salivary protein with anticoagulant activity that inhibits host thrombin (F2); binds to the proteinase in a reverse orientation (opposite to substrates). Inhibits thrombin-induced platelet aggregation. The polypeptide is Salivary thrombin inhibitor anophelin (Anopheles albimanus (New world malaria mosquito)).